Here is a 521-residue protein sequence, read N- to C-terminus: Anthranilate synthase component 1 (521 aa).

L-tryptophan-binding positions include Thr-40 and 292–294 (PYM). 329–330 (GT) contacts chorismate. A Mg(2+)-binding site is contributed by Glu-362. Chorismate-binding positions include Tyr-450, Arg-470, 484–486 (GAG), and Gly-486. A Mg(2+)-binding site is contributed by Glu-499.

The protein belongs to the anthranilate synthase component I family. As to quaternary structure, heterotetramer consisting of two non-identical subunits: a beta subunit (TrpG) and a large alpha subunit (TrpE). Requires Mg(2+) as cofactor.

It catalyses the reaction chorismate + L-glutamine = anthranilate + pyruvate + L-glutamate + H(+). The protein operates within amino-acid biosynthesis; L-tryptophan biosynthesis; L-tryptophan from chorismate: step 1/5. With respect to regulation, feedback inhibited by tryptophan. Part of a heterotetrameric complex that catalyzes the two-step biosynthesis of anthranilate, an intermediate in the biosynthesis of L-tryptophan. In the first step, the glutamine-binding beta subunit (TrpG) of anthranilate synthase (AS) provides the glutamine amidotransferase activity which generates ammonia as a substrate that, along with chorismate, is used in the second step, catalyzed by the large alpha subunit of AS (TrpE) to produce anthranilate. In the absence of TrpG, TrpE can synthesize anthranilate directly from chorismate and high concentrations of ammonia. In Buchnera aphidicola subsp. Acyrthosiphon pisum (strain APS) (Acyrthosiphon pisum symbiotic bacterium), this protein is Anthranilate synthase component 1 (trpE).